Here is a 486-residue protein sequence, read N- to C-terminus: Malonate-semialdehyde dehydrogenase (486 aa).

NAD(+) is bound by residues Phe154, Lys178, Glu181, Arg182, and Ser231. Residue Cys286 is the Nucleophile of the active site. Glu386 provides a ligand contact to NAD(+).

The protein belongs to the aldehyde dehydrogenase family. IolA subfamily. As to quaternary structure, homotetramer.

The enzyme catalyses 3-oxopropanoate + NAD(+) + CoA + H2O = hydrogencarbonate + acetyl-CoA + NADH + H(+). It catalyses the reaction 2-methyl-3-oxopropanoate + NAD(+) + CoA + H2O = propanoyl-CoA + hydrogencarbonate + NADH + H(+). It functions in the pathway polyol metabolism; myo-inositol degradation into acetyl-CoA; acetyl-CoA from myo-inositol: step 7/7. Functionally, catalyzes the oxidation of malonate semialdehyde (MSA) and methylmalonate semialdehyde (MMSA) into acetyl-CoA and propanoyl-CoA, respectively. Is involved in a myo-inositol catabolic pathway. Bicarbonate, and not CO2, is the end-product of the enzymatic reaction. The chain is Malonate-semialdehyde dehydrogenase from Bacillus cytotoxicus (strain DSM 22905 / CIP 110041 / 391-98 / NVH 391-98).